The chain runs to 68 residues: Conotoxin Cal14.13b (68 aa).

The signal sequence occupies residues 1–20 (MKLCVVIVLLMLAMPFNGGE). A propeptide spanning residues 21-68 (ASRFFNQHARSQRSGMKTRGIWCDPPCPEGETCRGGECSDEFNGDMGR) is cleaved from the precursor. Met-66 carries the methionine amide modification.

Post-translationally, contains 2 disulfide bonds. In terms of tissue distribution, expressed by the venom duct.

The protein localises to the secreted. Its function is as follows. Probable neurotoxin with unknown target. Possibly targets ion channels. The polypeptide is Conotoxin Cal14.13b (Californiconus californicus (California cone)).